A 407-amino-acid chain; its full sequence is Imidazolonepropionase (407 aa).

Residues H74 and H76 each contribute to the Fe(3+) site. Zn(2+) is bound by residues H74 and H76. R83, Y146, and H179 together coordinate 4-imidazolone-5-propanoate. Y146 is a binding site for N-formimidoyl-L-glutamate. H244 contacts Fe(3+). H244 serves as a coordination point for Zn(2+). Q247 provides a ligand contact to 4-imidazolone-5-propanoate. D319 is a binding site for Fe(3+). D319 is a Zn(2+) binding site. 2 residues coordinate N-formimidoyl-L-glutamate: N321 and G323. Residue T324 coordinates 4-imidazolone-5-propanoate.

It belongs to the metallo-dependent hydrolases superfamily. HutI family. The cofactor is Zn(2+). Fe(3+) is required as a cofactor.

It is found in the cytoplasm. The catalysed reaction is 4-imidazolone-5-propanoate + H2O = N-formimidoyl-L-glutamate. It functions in the pathway amino-acid degradation; L-histidine degradation into L-glutamate; N-formimidoyl-L-glutamate from L-histidine: step 3/3. Functionally, catalyzes the hydrolytic cleavage of the carbon-nitrogen bond in imidazolone-5-propanoate to yield N-formimidoyl-L-glutamate. It is the third step in the universal histidine degradation pathway. The sequence is that of Imidazolonepropionase from Salmonella typhimurium (strain LT2 / SGSC1412 / ATCC 700720).